We begin with the raw amino-acid sequence, 327 residues long: Probable cell division protein WhiA (327 aa).

The segment at residues 275-308 is a DNA-binding region (H-T-H motif); that stretch reads SLEELGRLADPQMTKDAVAGRIRRLLTMADKRAE.

This sequence belongs to the WhiA family.

Involved in cell division and chromosome segregation. This is Probable cell division protein WhiA from Corynebacterium glutamicum (strain ATCC 13032 / DSM 20300 / JCM 1318 / BCRC 11384 / CCUG 27702 / LMG 3730 / NBRC 12168 / NCIMB 10025 / NRRL B-2784 / 534).